A 1071-amino-acid polypeptide reads, in one-letter code: Exportin-1 (1071 aa).

The Importin N-terminal domain maps to 46 to 112; it reads AQEVLTHLKE…KKYVVGLIIK (67 aa). HEAT repeat units lie at residues 217–240, 241–277, 354–472, 515–553, 560–597, and 602–639; these read QNAP…PLGY, IFET…VSVS, MLLV…YVDT, RFLV…QYPR, KFLK…KCRR, and VQVG…AVGY. Positions 327-450 are necessary for interaction with Ran and nuclear export complex formation; sequence CTFLKEHGQL…VREFMKDTDS (124 aa). Phosphoserine is present on Ser-391. The segment at 411–481 is necessary for interaction with RANBP3; sequence TVLSKVRLLM…TEIIMTKKLQ (71 aa). Lys-446 is subject to N6-acetyllysine. A Phosphothreonine modification is found at Thr-448. Phosphoserine is present on Ser-450. Tyr-454 is subject to Phosphotyrosine. The residue at position 693 (Lys-693) is an N6-acetyllysine. HEAT repeat units lie at residues 775-813, 885-916, and 917-954; these read NFVP…KLGG, TMRN…SFYQ, and TYFC…NLVE. Residues Ser-966 and Ser-1031 each carry the phosphoserine modification. Residues 1002–1039 form an HEAT 10 repeat; the sequence is FSLNQDIPAFKEHLRDFLVQIKEFAGEDTSDLFLEERE.

Belongs to the exportin family. In terms of assembly, found in a U snRNA export complex with PHAX/RNUXA, NCBP1/CBP80, NCBP2/CBP20, RAN, XPO1 and m7G-capped RNA. Component of a nuclear export receptor complex composed of KPNB1, RAN, SNUPN and XPO1. Found in a trimeric export complex with SNUPN, RAN and XPO1. Found in a nuclear export complex with RANBP3 and RAN. Found in a 60S ribosomal subunit export complex with NMD3, RAN, XPO1. Interacts with DDX3X, NMD3, NUP42, NUP88, NUP214, RANBP3 and TERT. Interacts with NEMF (via its N-terminus). Interacts with the monomeric form of BIRC5/survivin deacetylated at 'Lys-129'. Interacts with DTNBP1 and SERTAD2; the interactions translocate DTNBP1 and SERTAD2 out of the nucleus. Interacts with ATF2. Interacts with SLC35G1 and STIM1. Interacts with DCAF8. Interacts with CPEB3. Interacts with HAX1. Interacts with BOK; translocates to the cytoplasm. Interacts with HSP90AB1. Interacts with LRPPRC; interacts with LRPPRC alone and also when LRPPRC is in complex with EIF4E and with EIF4E sensitivity element (4ESE)-containing mRNAs to form an EIF4E-dependent mRNA export complex.

The protein resides in the cytoplasm. It localises to the nucleus. It is found in the nucleoplasm. The protein localises to the cajal body. Its subcellular location is the nucleolus. Its function is as follows. Mediates the nuclear export of cellular proteins (cargos) bearing a leucine-rich nuclear export signal (NES) and of RNAs. In the nucleus, in association with RANBP3, binds cooperatively to the NES on its target protein and to the GTPase Ran in its active GTP-bound form. Docking of this complex to the nuclear pore complex (NPC) is mediated through binding to nucleoporins. Upon transit of a nuclear export complex into the cytoplasm, disassembling of the complex and hydrolysis of Ran-GTP to Ran-GDP (induced by RANBP1 and RANGAP1, respectively) cause release of the cargo from the export receptor. The directionality of nuclear export is thought to be conferred by an asymmetric distribution of the GTP- and GDP-bound forms of Ran between the cytoplasm and nucleus. Involved in U3 snoRNA transport from Cajal bodies to nucleoli. Binds to late precursor U3 snoRNA bearing a TMG cap. This Rattus norvegicus (Rat) protein is Exportin-1 (Xpo1).